The following is a 582-amino-acid chain: Pescadillo homolog (582 aa).

Residues 277–329 (LSALSASLARVVATVEEEENQLDNFPTEEEDQENMQAREKEQKEQEAQKRLFE) are a coiled coil. Residues 294 to 309 (EENQLDNFPTEEEDQE) show a composition bias toward acidic residues. Residues 294–317 (EENQLDNFPTEEEDQENMQAREKE) are disordered. The region spanning 323-416 (AQKRLFEGLK…MRLPVEDYFL (94 aa)) is the BRCT domain. Basic and acidic residues predominate over residues 445 to 454 (ALQRGEKPVQ). 2 disordered regions span residues 445–511 (ALQR…ETGS) and 554–582 (REVN…AKKQ). Acidic residues predominate over residues 455–477 (EEDEEEEDEDEEEDDDVDDEEFT). Residues 478-490 (EEKNLKKMEDTRA) are compositionally biased toward basic and acidic residues. Residues 517 to 582 (RLEQEEKAEE…QKKQKKAKKQ (66 aa)) are a coiled coil. Positions 572–582 (AQKKQKKAKKQ) are enriched in basic residues.

Belongs to the pescadillo family. Component of the PeBoW complex, composed of bop1, pes1 and wdr12. The complex is held together by bop1, which interacts with pes1 via its N-terminal domain and with wdr12 via a high-affinity interaction between the seven-bladed beta-propeller domains of the 2 proteins. The PeBoW complex associates with the 66S pre-ribosome.

Its subcellular location is the nucleus. The protein localises to the nucleolus. It is found in the nucleoplasm. In terms of biological role, component of the PeBoW complex, which is required for maturation of 28S and 5.8S ribosomal RNAs and formation of the 60S ribosome. This chain is Pescadillo homolog (pes1), found in Salmo salar (Atlantic salmon).